Here is a 55-residue protein sequence, read N- to C-terminus: MAKGARDKIKLESTAGTGHFYTTTKNKRNMPEKMEIMKFDPVARKHVAYKETKIK.

Residues Met1–Leu11 show a composition bias toward basic and acidic residues. The segment at Met1 to Thr24 is disordered. Positions Thr14 to Thr24 are enriched in polar residues.

The protein belongs to the bacterial ribosomal protein bL33 family.

This is Large ribosomal subunit protein bL33 from Burkholderia multivorans (strain ATCC 17616 / 249).